The following is a 573-amino-acid chain: Cytosolic 5'-nucleotidase 1B (573 aa).

Residues 1–11 (MSQTSLKHKKK) show a composition bias toward basic residues. Disordered regions lie at residues 1–200 (MSQT…PPTE) and 218–238 (EPEYISDGPQQRQRQQTEEDE). The span at 12–35 (NEPGMRYSKESLDAEKRKDSDKTG) shows a compositional bias: basic and acidic residues. Positions 60 to 73 (NQWSRTSRSPSTGA) are enriched in polar residues. Residues 93–105 (SSTTSRTSSASPS) are compositionally biased toward low complexity. Positions 115–136 (TSEKSSIQQTPQNRPITQLESQ) are enriched in polar residues. 2 stretches are compositionally biased toward basic and acidic residues: residues 161 to 174 (WAHRENREPRDLQL) and 182 to 194 (DSREGMPKTREYP). Catalysis depends on Asp-428, which acts as the Nucleophile.

Belongs to the 5'-nucleotidase type 3 family. Mg(2+) is required as a cofactor. As to expression, expressed at highest levels in testis. Also expressed in brain, skeletal muscle, kidney and heart.

It localises to the cytoplasm. The catalysed reaction is a ribonucleoside 5'-phosphate + H2O = a ribonucleoside + phosphate. The enzyme catalyses AMP + H2O = adenosine + phosphate. Its activity is regulated as follows. Activated by ADP. Catalyzes the hydrolysis of nucleotide monophosphates, releasing inorganic phosphate and the corresponding nucleoside, AMP is the major substrate. In Mus musculus (Mouse), this protein is Cytosolic 5'-nucleotidase 1B (Nt5c1b).